The chain runs to 270 residues: Putative phosphoenolpyruvate synthase regulatory protein (270 aa).

150–157 is an ADP binding site; that stretch reads GVSRCGKT.

This sequence belongs to the pyruvate, phosphate/water dikinase regulatory protein family. PSRP subfamily.

It carries out the reaction [pyruvate, water dikinase] + ADP = [pyruvate, water dikinase]-phosphate + AMP + H(+). The catalysed reaction is [pyruvate, water dikinase]-phosphate + phosphate + H(+) = [pyruvate, water dikinase] + diphosphate. In terms of biological role, bifunctional serine/threonine kinase and phosphorylase involved in the regulation of the phosphoenolpyruvate synthase (PEPS) by catalyzing its phosphorylation/dephosphorylation. The protein is Putative phosphoenolpyruvate synthase regulatory protein of Shewanella halifaxensis (strain HAW-EB4).